Here is a 411-residue protein sequence, read N- to C-terminus: 2,3-bisphosphoglycerate-independent phosphoglycerate mutase (411 aa).

Belongs to the BPG-independent phosphoglycerate mutase family. A-PGAM subfamily.

It catalyses the reaction (2R)-2-phosphoglycerate = (2R)-3-phosphoglycerate. The protein operates within carbohydrate degradation; glycolysis; pyruvate from D-glyceraldehyde 3-phosphate: step 3/5. In terms of biological role, catalyzes the interconversion of 2-phosphoglycerate and 3-phosphoglycerate. The chain is 2,3-bisphosphoglycerate-independent phosphoglycerate mutase from Methanosphaerula palustris (strain ATCC BAA-1556 / DSM 19958 / E1-9c).